The primary structure comprises 67 residues: Epsilon-conotoxin TxVA (67 aa).

A signal peptide spans 1 to 19 (MRCFPVFIILLLLIASAPC). Residues 20–50 (FDARTKTDDDVPLSSLRDNLKRTIRTRLNIR) constitute a propeptide that is removed on maturation. E51 and E54 each carry 4-carboxyglutamate. Disulfide bonds link C52–C58 and C53–C59. W57 carries the post-translational modification 6'-bromotryptophan. An O-linked (GalNAc...) threonine glycan is attached at T60. 4-hydroxyproline is present on P63. Residues 64-67 (LTGR) constitute a propeptide that is removed on maturation.

In terms of processing, O-glycan consists of the disaccharide Gal-GalNAc. As to expression, expressed by the venom duct.

It localises to the secreted. Epsilon-conotoxins act at presynaptic membranes, blocking the calcium channels or G protein-coupled receptors. Causes hyperactivity upon intracranial injection into mice. Causes dorsal fins drooping in fish. The chain is Epsilon-conotoxin TxVA from Conus textile (Cloth-of-gold cone).